A 244-amino-acid polypeptide reads, in one-letter code: MTELVYEQPLNEKIRSYLRLEYLDKQLQSNLNHDHQHRCFYPLFSLCELSERCDYRNEVLKDIERHLLQLSKWQELDHVDHQQIDLYINALTQAREPLQKPERFGSQLKQDRFISALRQRFGMPGACCNFDLPQLHYWLAKPWEEKQQDYRSWIAHFEPLLTPITLLLQLTRSTAHYDNAVAHAGFYQGDSAQALALVRVKVDASHGCYPTISGHKNRFAIHFVQFEQQRHSDRSIDFLLATCA.

The protein belongs to the ZapD family. In terms of assembly, interacts with FtsZ.

Its subcellular location is the cytoplasm. In terms of biological role, cell division factor that enhances FtsZ-ring assembly. Directly interacts with FtsZ and promotes bundling of FtsZ protofilaments, with a reduction in FtsZ GTPase activity. This is Cell division protein ZapD from Shewanella baltica (strain OS185).